The following is a 290-amino-acid chain: Iron-sulfur cluster carrier protein (290 aa).

Gly47–Ser54 contacts ATP.

The protein belongs to the Mrp/NBP35 ATP-binding proteins family. Homodimer.

Binds and transfers iron-sulfur (Fe-S) clusters to target apoproteins. Can hydrolyze ATP. The polypeptide is Iron-sulfur cluster carrier protein (Methanocaldococcus jannaschii (strain ATCC 43067 / DSM 2661 / JAL-1 / JCM 10045 / NBRC 100440) (Methanococcus jannaschii)).